The following is a 277-amino-acid chain: Caspase-3 (277 aa).

An N-acetylmethionine modification is found at M1. Propeptides lie at residues M1–D9 and S10–D28. The residue at position 11 (K11) is an N6-acetyllysine. S26 bears the Phosphoserine mark. Residues H121 and C163 contribute to the active site. S-nitrosocysteine; in inhibited form is present on C163. At R207 the chain carries (Microbial infection) ADP-riboxanated arginine.

Belongs to the peptidase C14A family. As to quaternary structure, heterotetramer that consists of two anti-parallel arranged heterodimers, each one formed by a 17 kDa (p17) and a 12 kDa (p12) subunit. Interacts with BIRC6/bruce. Cleavage by granzyme B, caspase-6, caspase-8 and caspase-10 generates the two active subunits. Additional processing of the propeptides is likely due to the autocatalytic activity of the activated protease. Active heterodimers between the small subunit of caspase-7 protease and the large subunit of caspase-3 also occur and vice versa. In terms of processing, S-nitrosylated on its catalytic site cysteine in unstimulated human cell lines and denitrosylated upon activation of the Fas apoptotic pathway, associated with an increase in intracellular caspase activity. Fas therefore activates caspase-3 not only by inducing the cleavage of the caspase zymogen to its active subunits, but also by stimulating the denitrosylation of its active site thiol. Post-translationally, ubiquitinated by BIRC6; this activity is inhibited by DIABLO/SMAC. (Microbial infection) ADP-riboxanation by C.violaceum CopC blocks CASP3 processing, preventing CASP3 activation and ability to recognize and cleave substrates. As to expression, highly expressed in lung, spleen, heart, liver and kidney. Moderate levels in brain and skeletal muscle, and low in testis. Also found in many cell lines, highest expression in cells of the immune system.

The protein localises to the cytoplasm. The catalysed reaction is Strict requirement for an Asp residue at positions P1 and P4. It has a preferred cleavage sequence of Asp-Xaa-Xaa-Asp-|- with a hydrophobic amino-acid residue at P2 and a hydrophilic amino-acid residue at P3, although Val or Ala are also accepted at this position.. Inhibited by isatin sulfonamides. Inhibited by BIRC6; following inhibition of BIRC6-caspase binding by DIABLO/SMAC, BIRC6 is subjected to caspase cleavage, leading to an increase in active caspases. Its function is as follows. Thiol protease that acts as a major effector caspase involved in the execution phase of apoptosis. Following cleavage and activation by initiator caspases (CASP8, CASP9 and/or CASP10), mediates execution of apoptosis by catalyzing cleavage of many proteins. At the onset of apoptosis, it proteolytically cleaves poly(ADP-ribose) polymerase PARP1 at a '216-Asp-|-Gly-217' bond. Cleaves and activates sterol regulatory element binding proteins (SREBPs) between the basic helix-loop-helix leucine zipper domain and the membrane attachment domain. Cleaves and activates caspase-6, -7 and -9 (CASP6, CASP7 and CASP9, respectively). Cleaves and inactivates interleukin-18 (IL18). Involved in the cleavage of huntingtin. Triggers cell adhesion in sympathetic neurons through RET cleavage. Cleaves and inhibits serine/threonine-protein kinase AKT1 in response to oxidative stress. Acts as an inhibitor of type I interferon production during virus-induced apoptosis by mediating cleavage of antiviral proteins CGAS, IRF3 and MAVS, thereby preventing cytokine overproduction. Also involved in pyroptosis by mediating cleavage and activation of gasdermin-E (GSDME). Cleaves XRCC4 and phospholipid scramblase proteins XKR4, XKR8 and XKR9, leading to promote phosphatidylserine exposure on apoptotic cell surface. Cleaves BIRC6 following inhibition of BIRC6-caspase binding by DIABLO/SMAC. The chain is Caspase-3 (CASP3) from Homo sapiens (Human).